Reading from the N-terminus, the 339-residue chain is Ketol-acid reductoisomerase (NADP(+)) (339 aa).

A KARI N-terminal Rossmann domain is found at Met1–Thr182. Residues Tyr24–Gln27, Arg48, Ser51, Thr53, and Asp83–Gln86 each bind NADP(+). Residue His108 is part of the active site. Gly134 serves as a coordination point for NADP(+). Residues Asn183–Ile328 enclose the KARI C-terminal knotted domain. Residues Asp191, Glu195, Glu227, and Glu231 each coordinate Mg(2+). Position 252 (Ser252) interacts with substrate.

This sequence belongs to the ketol-acid reductoisomerase family. Requires Mg(2+) as cofactor.

It carries out the reaction (2R)-2,3-dihydroxy-3-methylbutanoate + NADP(+) = (2S)-2-acetolactate + NADPH + H(+). It catalyses the reaction (2R,3R)-2,3-dihydroxy-3-methylpentanoate + NADP(+) = (S)-2-ethyl-2-hydroxy-3-oxobutanoate + NADPH + H(+). It functions in the pathway amino-acid biosynthesis; L-isoleucine biosynthesis; L-isoleucine from 2-oxobutanoate: step 2/4. Its pathway is amino-acid biosynthesis; L-valine biosynthesis; L-valine from pyruvate: step 2/4. Involved in the biosynthesis of branched-chain amino acids (BCAA). Catalyzes an alkyl-migration followed by a ketol-acid reduction of (S)-2-acetolactate (S2AL) to yield (R)-2,3-dihydroxy-isovalerate. In the isomerase reaction, S2AL is rearranged via a Mg-dependent methyl migration to produce 3-hydroxy-3-methyl-2-ketobutyrate (HMKB). In the reductase reaction, this 2-ketoacid undergoes a metal-dependent reduction by NADPH to yield (R)-2,3-dihydroxy-isovalerate. This chain is Ketol-acid reductoisomerase (NADP(+)), found in Caulobacter sp. (strain K31).